We begin with the raw amino-acid sequence, 223 residues long: Ribosomal RNA small subunit methyltransferase G (223 aa).

S-adenosyl-L-methionine is bound by residues G82, L87, 133–134, and R151; that span reads AE.

This sequence belongs to the methyltransferase superfamily. RNA methyltransferase RsmG family.

It is found in the cytoplasm. Functionally, specifically methylates the N7 position of guanine in position 518 of 16S rRNA. This is Ribosomal RNA small subunit methyltransferase G from Corynebacterium glutamicum (strain R).